Consider the following 112-residue polypeptide: Protein ECM19 (112 aa).

A helical transmembrane segment spans residues 35–57 (NTLDMVTIGIACLVGVYTGTRFF). Residues 82–112 (EDGNLLKVTPSLSSTPAAPPTPPTPPTPPQQ) are disordered. Residues 98 to 112 (AAPPTPPTPPTPPQQ) are compositionally biased toward pro residues.

It is found in the mitochondrion membrane. Its function is as follows. May be involved in cell wall organization and biogenesis. The protein is Protein ECM19 (ECM19) of Saccharomyces cerevisiae (strain ATCC 204508 / S288c) (Baker's yeast).